We begin with the raw amino-acid sequence, 72 residues long: Thiostrepton (72 aa).

A propeptide spanning residues 1–55 (MDATAIHERWSVMSNASIGQEIGVEGLTGLDVDALEISDYVDETLLDGEDLTVTM) is cleaved from the precursor. Residues 56–67 (IASASCTTCICT) constitute a cross-link (4-(1-hydroxyethyl)-7-isoleucino-2-(threonin-O3-ylcarbonyl)-7,8-dihydroquinolin-8-ol (Ile-Thr)). A 2,3-didehydroalanine (Ser) modification is found at serine 58. Positions 60–61 (SC) form a cross-link, thiazole-4-carboxylic acid (Ser-Cys). Residues 60–68 (SCTTCICTC) constitute a cross-link (5-amino-piperideine-2,5-dicarboxylic acid (Ser-Cys) (with S-69)). A cross-link (5-amino-piperideine-2,5-dicarboxylic acid (Ser-Ser) (with C-68)) is located at residues 60-69 (SCTTCICTCS). A (Z)-2,3-didehydrobutyrine modification is found at threonine 63. The (4S)-thiazoline-4-carboxylic acid (Thr-Cys) cross-link spans 63-64 (TC). Isoleucine 65 is subject to (3S,4R)-3,4-dihydroxyisoleucine. The segment at residues 65–66 (IC) is a cross-link (thiazole-4-carboxylic acid (Ile-Cys)). Positions 67 to 68 (TC) form a cross-link, thiazole-4-carboxylic acid (Thr-Cys). The segment at residues 69–70 (SC) is a cross-link (thiazole-4-carboxylic acid (Ser-Cys)). 2,3-didehydroalanine (Ser) occurs at positions 71 and 72. Serine 72 carries the serine amide modification.

The protein belongs to the thiocillin family. In terms of processing, maturation of thiazole and oxazole containing antibiotics involves the enzymatic condensation of a Cys, Ser or Thr with the alpha-carbonyl of the preceding amino acid to form a thioether or ether bond, then dehydration to form a double bond with the alpha-amino nitrogen. Thiazoline or oxazoline ring are dehydrogenated to form thiazole or oxazole rings. Maturation of pyridinyl containing antibiotics involves the cross-linking of a Ser and a Cys-Ser pair usually separated by 7 or 8 residues along the peptide chain. The Ser residues are dehydrated to didehydroalanines, then bonded between their beta carbons. The alpha carbonyl of the Cys condenses with alpha carbon of the first Ser to form a pyridinyl ring. The ring may be multiply dehydrogenated to form a pyridine ring with loss of the amino nitrogen of the first Ser. Post-translationally, the amidation of Ser-72 probably does not occur by the same mechanism, oxidative cleavage of glycine, as in eukaryotes. In terms of processing, the structure of the 2,3-didehydrobutyrin is shown to be Z-isomer.

Its subcellular location is the secreted. Its function is as follows. Has bacteriocidal activity. Inhibits bacterial protein biosynthesis by acting on the elongation factor Tu (EF-Tu). This is Thiostrepton (tpdA) from Streptomyces azureus.